The chain runs to 90 residues: Phosphocarrier protein NPr (90 aa).

Residues 2 to 90 (TQYRRVAIKN…ALFESGFDED (89 aa)) enclose the HPr domain. His16 acts as the Pros-phosphohistidine intermediate in catalysis.

The protein belongs to the HPr family.

Its subcellular location is the cytoplasm. Component of the phosphoenolpyruvate-dependent nitrogen-metabolic phosphotransferase system (nitrogen-metabolic PTS), that seems to be involved in regulating nitrogen metabolism. The phosphoryl group from phosphoenolpyruvate (PEP) is transferred to the phosphoryl carrier protein NPr by enzyme I-Ntr. Phospho-NPr then transfers it to EIIA-Ntr. Could function in the transcriptional regulation of sigma-54 dependent operons in conjunction with the NPr (PtsO) and EIIA-Ntr (PtsN) proteins. The chain is Phosphocarrier protein NPr (ptsO) from Proteus mirabilis (strain HI4320).